Reading from the N-terminus, the 494-residue chain is Probable malate:quinone oxidoreductase 3 (494 aa).

This sequence belongs to the MQO family. The cofactor is FAD.

It carries out the reaction (S)-malate + a quinone = a quinol + oxaloacetate. Its pathway is carbohydrate metabolism; tricarboxylic acid cycle; oxaloacetate from (S)-malate (quinone route): step 1/1. The chain is Probable malate:quinone oxidoreductase 3 from Staphylococcus epidermidis (strain ATCC 35984 / DSM 28319 / BCRC 17069 / CCUG 31568 / BM 3577 / RP62A).